Here is a 256-residue protein sequence, read N- to C-terminus: Imidazole glycerol phosphate synthase subunit HisF (256 aa).

Catalysis depends on residues Asp-12 and Asp-131.

Belongs to the HisA/HisF family. In terms of assembly, heterodimer of HisH and HisF.

Its subcellular location is the cytoplasm. It catalyses the reaction 5-[(5-phospho-1-deoxy-D-ribulos-1-ylimino)methylamino]-1-(5-phospho-beta-D-ribosyl)imidazole-4-carboxamide + L-glutamine = D-erythro-1-(imidazol-4-yl)glycerol 3-phosphate + 5-amino-1-(5-phospho-beta-D-ribosyl)imidazole-4-carboxamide + L-glutamate + H(+). The protein operates within amino-acid biosynthesis; L-histidine biosynthesis; L-histidine from 5-phospho-alpha-D-ribose 1-diphosphate: step 5/9. IGPS catalyzes the conversion of PRFAR and glutamine to IGP, AICAR and glutamate. The HisF subunit catalyzes the cyclization activity that produces IGP and AICAR from PRFAR using the ammonia provided by the HisH subunit. This Thermobifida fusca (strain YX) protein is Imidazole glycerol phosphate synthase subunit HisF.